We begin with the raw amino-acid sequence, 330 residues long: 3',5'-cyclic-nucleotide phosphodiesterase (330 aa).

Residues 1 to 22 form the signal peptide; it reads MFKNKLAVLFTCLSVFSFSAQS.

This sequence belongs to the cyclic nucleotide phosphodiesterase class-II family.

The protein localises to the periplasm. The catalysed reaction is a nucleoside 3',5'-cyclic phosphate + H2O = a nucleoside 5'-phosphate + H(+). Seems to allow the organism to grow on cAMP. The chain is 3',5'-cyclic-nucleotide phosphodiesterase (cpdP) from Aliivibrio fischeri (Vibrio fischeri).